Here is a 479-residue protein sequence, read N- to C-terminus: Ribulose bisphosphate carboxylase large chain (479 aa).

The propeptide occupies 1 to 2; the sequence is MS. Positions 123 and 173 each coordinate substrate. Lys175 acts as the Proton acceptor in catalysis. Residue Lys177 coordinates substrate. Lys201, Asp203, and Glu204 together coordinate Mg(2+). N6-carboxylysine is present on Lys201. Ser208 bears the Phosphoserine mark. The active-site Proton acceptor is the His294. Positions 295 and 327 each coordinate substrate. Residue Thr330 is modified to Phosphothreonine. Residue Ser379 coordinates substrate.

It belongs to the RuBisCO large chain family. Type I subfamily. Heterohexadecamer of 8 large chains and 8 small chains; disulfide-linked. The disulfide link is formed within the large subunit homodimers. It depends on Mg(2+) as a cofactor. The disulfide bond which can form in the large chain dimeric partners within the hexadecamer appears to be associated with oxidative stress and protein turnover.

Its subcellular location is the plastid. The protein resides in the chloroplast. The catalysed reaction is 2 (2R)-3-phosphoglycerate + 2 H(+) = D-ribulose 1,5-bisphosphate + CO2 + H2O. It carries out the reaction D-ribulose 1,5-bisphosphate + O2 = 2-phosphoglycolate + (2R)-3-phosphoglycerate + 2 H(+). Functionally, ruBisCO catalyzes two reactions: the carboxylation of D-ribulose 1,5-bisphosphate, the primary event in carbon dioxide fixation, as well as the oxidative fragmentation of the pentose substrate in the photorespiration process. Both reactions occur simultaneously and in competition at the same active site. This is Ribulose bisphosphate carboxylase large chain from Olimarabidopsis pumila (Dwarf rocket).